The chain runs to 116 residues: NADH-ubiquinone oxidoreductase chain 3 (116 aa).

Helical transmembrane passes span 3 to 23, 56 to 76, and 87 to 107; these read LITT…TISF, FFLI…LLPL, and LTLI…IYEW.

It belongs to the complex I subunit 3 family.

It is found in the mitochondrion membrane. The enzyme catalyses a ubiquinone + NADH + 5 H(+)(in) = a ubiquinol + NAD(+) + 4 H(+)(out). Functionally, core subunit of the mitochondrial membrane respiratory chain NADH dehydrogenase (Complex I) that is believed to belong to the minimal assembly required for catalysis. Complex I functions in the transfer of electrons from NADH to the respiratory chain. The immediate electron acceptor for the enzyme is believed to be ubiquinone. The sequence is that of NADH-ubiquinone oxidoreductase chain 3 (MT-ND3) from Oncorhynchus tshawytscha (Chinook salmon).